Consider the following 566-residue polypeptide: Good for full DBP5 activity protein 2 (566 aa).

Positions 1–16 (MQVQKMVRDNSNNGSD) are enriched in polar residues. The interval 1–41 (MQVQKMVRDNSNNGSDKSVHWERRNNNGAGPRYRSRSGNTG) is disordered.

In terms of biological role, high-copy suppressor of DBP5 mutation. In Saccharomyces cerevisiae (strain ATCC 204508 / S288c) (Baker's yeast), this protein is Good for full DBP5 activity protein 2 (GFD2).